We begin with the raw amino-acid sequence, 3416 residues long: Genome polyprotein (3416 aa).

Positions 1-34 are disordered; that stretch reads MAKGAVLKGKGGGPPRRVPKETAKKTRQGPGRLP. The Cytoplasmic portion of the chain corresponds to 1–99; it reads MAKGAVLKGK…NKRRGKRRST (99 aa). A propeptide spans 97 to 117 (ER anchor for the capsid protein C, removed in mature form by serine protease NS3); sequence RSTTGLLTPILLACLATLVFS. A helical transmembrane segment spans residues 100-120; sequence TGLLTPILLACLATLVFSATV. Over 121-243 the chain is Extracellular; that stretch reads RRERTGNMVI…HLTRVEGWVW (123 aa). An N-linked (GlcNAc...) asparagine; by host glycan is attached at Asn145. A helical transmembrane segment spans residues 244–261; it reads KNKFLTAAFCAVVWMVTD. A topological domain (cytoplasmic) is located at residue Ser262. Residues 263–281 traverse the membrane as a helical segment; sequence LPTRFIVITVALCLAPTYA. The Extracellular segment spans residues 282-728; the sequence is TRCTHLQNRD…HTAFGAAFNT (447 aa). Intrachain disulfides connect Cys284-Cys311, Cys341-Cys397, Cys341-Cys402, Cys355-Cys386, Cys373-Cys397, and Cys373-Cys402. The interval 379 to 392 is fusion peptide; that stretch reads DRGWGNHCGLFGKG. The N-linked (GlcNAc...) asparagine; by host glycan is linked to Asn435. 2 cysteine pairs are disulfide-bonded: Cys467–Cys571 and Cys588–Cys619. The helical transmembrane segment at 729-749 threads the bilayer; the sequence is IFGGVGFLPRILLGVALAWLG. Residues 750-756 are Cytoplasmic-facing; that stretch reads LNSRNPT. The chain crosses the membrane as a helical span at residues 757–777; the sequence is LSVGFLITGGLVLTMTLGVGA. Residues 778 to 1134 lie on the Extracellular side of the membrane; that stretch reads DMGCAIDANR…RSMVLADNGA (357 aa). 6 disulfides stabilise this stretch: Cys781/Cys792, Cys832/Cys922, Cys957/Cys1002, Cys1059/Cys1108, Cys1070/Cys1092, and Cys1091/Cys1095. Asn862, Asn985, and Asn1001 each carry an N-linked (GlcNAc...) asparagine; by host glycan. A helical membrane pass occupies residues 1135–1155; the sequence is MLSEGGVPGIVAVFVVLELVI. At 1156-1164 the chain is on the lumenal side; sequence RRRPTTGSS. The chain crosses the membrane as a helical span at residues 1165–1185; it reads VVWCGMVVLGLVVTGLVTIEG. At 1186-1189 the chain is on the cytoplasmic side; the sequence is LCRY. The chain crosses the membrane as a helical span at residues 1190-1210; that stretch reads VVAVGILMSMELGPEIVALVL. Residues 1211-1235 are Lumenal-facing; sequence LQAVFDMRTGLLVAFAVKRAYTTRE. The chain crosses the membrane as a helical span at residues 1236 to 1256; that stretch reads AVATYFLLLVLELGFPEASLS. At 1257 to 1295 the chain is on the cytoplasmic side; sequence NIWKWADSLAMGALILQACGQEGRTRVGYLLAAMMTQKD. The helical transmembrane segment at 1296 to 1316 threads the bilayer; it reads MVIIHTGLTIFLSAATAMAVW. Residues 1317–1361 lie on the Lumenal side of the membrane; sequence SMIKGQRDQKGLSWATPLAGLLGGEGVGLRLLAFRKLAERRNRRS. A helical transmembrane segment spans residues 1362 to 1379; that stretch reads FSEPLTVVGVMLTVASGM. Residues 1380 to 1384 are Cytoplasmic-facing; sequence VRHTS. The chain crosses the membrane as a helical span at residues 1385–1405; the sequence is QEALCALVAGAFLLLMMVLGT. Residues 1406 to 1456 lie on the Lumenal side of the membrane; that stretch reads RKMQLTAEWCGEVEWNPDLVNEGGEVNLKVRQDAMGNLHLTEVEKEERAMA. An interacts with and activates NS3 protease region spans residues 1412–1451; the sequence is AEWCGEVEWNPDLVNEGGEVNLKVRQDAMGNLHLTEVEKE. Positions 1457-1477 form an intramembrane region, helical; it reads LWLLAGLVASAFHWAGILIVL. Topologically, residues 1478–2162 are lumenal; it reads AVWTLFEMLG…RMAERDAPEA (685 aa). The Peptidase S7 domain maps to 1492-1671; the sequence is SELVFSGQET…EAEKSRPEIP (180 aa). Catalysis depends on charge relay system; for serine protease NS3 activity residues His1545, Asp1569, and Ser1629. The region spanning 1677–1833 is the Helicase ATP-binding domain; that stretch reads TGWMSKGQIT…ESNGAIMSEE (157 aa). An ATP-binding site is contributed by 1690–1697; it reads MHPGSGKT. The DEAH box motif lies at 1781–1784; the sequence is DEAH. A Helicase C-terminal domain is found at 1844-2002; sequence GFDWITEYEG…TLRGPVATFY (159 aa). Position 1885 is an N6-acetyllysine; by host (Lys1885). The helical transmembrane segment at 2163–2183 threads the bilayer; sequence FLTIVEVAVLGVATLGILWCF. At 2184–2191 the chain is on the cytoplasmic side; sequence VARASVSR. An intramembrane region (helical) is located at residues 2192-2211; the sequence is MFLGTVVLFAALFLLWIGGV. Position 2212 (Asp2212) is a topological domain, lumenal. A helical transmembrane segment spans residues 2213-2233; the sequence is YGHMAGIALIFYTLLTVLQPE. The Cytoplasmic portion of the chain corresponds to 2234–2246; it reads PGKQRSSDDNRLA. The chain crosses the membrane as a helical span at residues 2247 to 2267; it reads YFLLGLFSLAGLVTANEMGML. Topologically, residues 2268 to 2301 are lumenal; sequence DKTKADLAGLVWRGEQRHPAWEEWTNVDIQPARS. The helical intramembrane region spans 2302 to 2322; it reads WGTYVLIVSLFTPYMLHQLQT. At 2323 to 2345 the chain is on the lumenal side; it reads KIQQLVNSSVASGAQAMRDLGGG. Positions 2346 to 2366 form an intramembrane region, helical; it reads TPFFGVAGHVIALGVTSLVGA. The Lumenal portion of the chain corresponds to 2367-2368; it reads TP. A helical transmembrane segment spans residues 2369–2389; that stretch reads MSLGLGVALAAFHLAIVASGL. At 2390 to 2432 the chain is on the cytoplasmic side; sequence EAELTQRAHRVFFSAMVKNPMVDGDVINPFPDGETKPALYERR. The helical transmembrane segment at 2433 to 2453 threads the bilayer; the sequence is MSLILAIALCMGSVVLNRTAA. Residues 2454 to 2476 lie on the Lumenal side of the membrane; sequence SMTEAGAVGLAALGQLVHPETET. The chain crosses the membrane as a helical span at residues 2477 to 2497; that stretch reads LWTMPMACGMAGLVRGSFWGL. Topologically, residues 2498-3416 are cytoplasmic; that stretch reads LPMGHRLWLR…WDLKLESNII (919 aa). In terms of domain architecture, mRNA cap 0-1 NS5-type MT spans 2514 to 2778; that stretch reads GGAEGETLGD…EVDLGTGTRC (265 aa). Ser2569 provides a ligand contact to S-adenosyl-L-methionine. Residue Ser2569 is modified to Phosphoserine. Lys2574 acts as the For 2'-O-MTase activity in catalysis. Residues Gly2599, Trp2600, Thr2617, Ile2618, Asp2644, and Val2645 each coordinate S-adenosyl-L-methionine. The active-site For 2'-O-MTase activity is the Asp2659. An S-adenosyl-L-methionine-binding site is contributed by Ile2660. Residues Lys2696 and Glu2732 each act as for 2'-O-MTase activity in the active site. The interaction with host SCRIB stretch occupies residues 2732–2736; it reads EMYFS. Tyr2734 serves as a coordination point for S-adenosyl-L-methionine. Zn(2+) is bound by residues Glu2952, His2956, Cys2961, and Cys2964. Residues 3042-3191 form the RdRp catalytic domain; sequence GLFYADDTAG…RPIDDRFGKA (150 aa). His3226, Cys3242, and Cys3361 together coordinate Zn(2+).

It in the N-terminal section; belongs to the class I-like SAM-binding methyltransferase superfamily. mRNA cap 0-1 NS5-type methyltransferase family. Homodimer. Interacts (via N-terminus) with host EXOC1 (via C-terminus); this interaction results in EXOC1 degradation through the proteasome degradation pathway. In terms of assembly, forms heterodimers with envelope protein E in the endoplasmic reticulum and Golgi. As to quaternary structure, homodimer; in the endoplasmic reticulum and Golgi. Interacts with protein prM. Interacts with non-structural protein 1. Homodimer; Homohexamer when secreted. Interacts with envelope protein E. NS1 interacts with NS4B. Interacts with host complement protein CFH; this interaction leads to the degradation of C3. In terms of assembly, interacts (via N-terminus) with serine protease NS3. As to quaternary structure, forms a heterodimer with serine protease NS3. May form homooligomers. Forms a heterodimer with NS2B. Interacts with non-structural protein 2A (via N-terminus). Interacts with NS4B. Interacts with unphosphorylated RNA-directed RNA polymerase NS5; this interaction stimulates RNA-directed RNA polymerase NS5 guanylyltransferase activity. In terms of assembly, interacts with serine protease NS3. As to quaternary structure, homodimer. Interacts with host STAT2; this interaction inhibits the phosphorylation of the latter, and, when all viral proteins are present (polyprotein), targets STAT2 for degradation. Interacts with serine protease NS3. Post-translationally, specific enzymatic cleavages in vivo yield mature proteins. Cleavages in the lumen of endoplasmic reticulum are performed by host signal peptidase, whereas cleavages in the cytoplasmic side are performed by serine protease NS3. Signal cleavage at the 2K-4B site requires a prior NS3 protease-mediated cleavage at the 4A-2K site. Cleaved in post-Golgi vesicles by a host furin, releasing the mature small envelope protein M, and peptide pr. This cleavage is incomplete as up to 30% of viral particles still carry uncleaved prM. In terms of processing, N-glycosylated. Post-translationally, N-glycosylated. The excreted form is glycosylated and this is required for efficient secretion of the protein from infected cells. Acetylated by host KAT5. Acetylation modulates NS3 RNA-binding and unwinding activities and plays an important positive role for viral replication. In terms of processing, phosphorylated on serines residues. This phosphorylation may trigger NS5 nuclear localization.

It is found in the virion. The protein localises to the host nucleus. The protein resides in the host cytoplasm. It localises to the host perinuclear region. Its subcellular location is the secreted. It is found in the virion membrane. The protein localises to the host endoplasmic reticulum membrane. It carries out the reaction Selective hydrolysis of -Xaa-Xaa-|-Yaa- bonds in which each of the Xaa can be either Arg or Lys and Yaa can be either Ser or Ala.. It catalyses the reaction RNA(n) + a ribonucleoside 5'-triphosphate = RNA(n+1) + diphosphate. The catalysed reaction is a ribonucleoside 5'-triphosphate + H2O = a ribonucleoside 5'-diphosphate + phosphate + H(+). The enzyme catalyses ATP + H2O = ADP + phosphate + H(+). It carries out the reaction a 5'-end (5'-triphosphoguanosine)-ribonucleoside in mRNA + S-adenosyl-L-methionine = a 5'-end (N(7)-methyl 5'-triphosphoguanosine)-ribonucleoside in mRNA + S-adenosyl-L-homocysteine. It catalyses the reaction a 5'-end (N(7)-methyl 5'-triphosphoguanosine)-ribonucleoside in mRNA + S-adenosyl-L-methionine = a 5'-end (N(7)-methyl 5'-triphosphoguanosine)-(2'-O-methyl-ribonucleoside) in mRNA + S-adenosyl-L-homocysteine + H(+). Its function is as follows. Plays a role in virus budding by binding to the cell membrane and gathering the viral RNA into a nucleocapsid that forms the core of a mature virus particle. During virus entry, may induce genome penetration into the host cytoplasm after hemifusion induced by the surface proteins. Can migrate to the cell nucleus where it modulates host functions. Inhibits RNA silencing by interfering with host Dicer. In terms of biological role, prevents premature fusion activity of envelope proteins in trans-Golgi by binding to envelope protein E at pH6.0. After virion release in extracellular space, gets dissociated from E dimers. Functionally, acts as a chaperone for envelope protein E during intracellular virion assembly by masking and inactivating envelope protein E fusion peptide. prM is the only viral peptide matured by host furin in the trans-Golgi network probably to avoid catastrophic activation of the viral fusion activity in acidic Golgi compartment prior to virion release. prM-E cleavage is inefficient, and many virions are only partially matured. These uncleaved prM would play a role in immune evasion. Its function is as follows. May play a role in virus budding. Exerts cytotoxic effects by activating a mitochondrial apoptotic pathway through M ectodomain. May display a viroporin activity. Binds to host cell surface receptor and mediates fusion between viral and cellular membranes. Envelope protein is synthesized in the endoplasmic reticulum in the form of heterodimer with protein prM. They play a role in virion budding in the ER, and the newly formed immature particle is covered with 60 spikes composed of heterodimer between precursor prM and envelope protein E. The virion is transported to the Golgi apparatus where the low pH causes dissociation of PrM-E heterodimers and formation of E homodimers. prM-E cleavage is inefficient, and many virions are only partially matured. These uncleaved prM would play a role in immune evasion. In terms of biological role, involved in immune evasion, pathogenesis and viral replication. Once cleaved off the polyprotein, is targeted to three destinations: the viral replication cycle, the plasma membrane and the extracellular compartment. Essential for viral replication. Required for formation of the replication complex and recruitment of other non-structural proteins to the ER-derived membrane structures. Excreted as a hexameric lipoparticle that plays a role against host immune response. Antagonizing the complement function. Binds to the host macrophages and dendritic cells. Inhibits signal transduction originating from Toll-like receptor 3 (TLR3). Functionally, component of the viral RNA replication complex that functions in virion assembly and antagonizes the host immune response. Its function is as follows. Required cofactor for the serine protease function of NS3. May have membrane-destabilizing activity and form viroporins. Displays three enzymatic activities: serine protease, NTPase and RNA helicase. NS3 serine protease, in association with NS2B, performs its autocleavage and cleaves the polyprotein at dibasic sites in the cytoplasm: C-prM, NS2A-NS2B, NS2B-NS3, NS3-NS4A, NS4A-2K and NS4B-NS5. NS3 RNA helicase binds RNA and unwinds dsRNA in the 3' to 5' direction. In terms of biological role, regulates the ATPase activity of the NS3 helicase activity. NS4A allows NS3 helicase to conserve energy during unwinding. Functionally, functions as a signal peptide for NS4B and is required for the interferon antagonism activity of the latter. Its function is as follows. Induces the formation of ER-derived membrane vesicles where the viral replication takes place. Inhibits interferon (IFN)-induced host STAT1 phosphorylation and nuclear translocation, thereby preventing the establishment of cellular antiviral state by blocking the IFN-alpha/beta pathway. Inhibits STAT2 translocation in the nucleus after IFN-alpha treatment. Replicates the viral (+) and (-) RNA genome, and performs the capping of genomes in the cytoplasm. NS5 methylates viral RNA cap at guanine N-7 and ribose 2'-O positions. Besides its role in RNA genome replication, also prevents the establishment of cellular antiviral state by blocking the interferon-alpha/beta (IFN-alpha/beta) signaling pathway. Inhibits host TYK2 and STAT2 phosphorylation, thereby preventing activation of JAK-STAT signaling pathway. The polypeptide is Genome polyprotein (Homo sapiens (Human)).